Here is a 241-residue protein sequence, read N- to C-terminus: Small ribosomal subunit protein uS2 (241 aa).

It belongs to the universal ribosomal protein uS2 family.

The sequence is that of Small ribosomal subunit protein uS2 from Photorhabdus laumondii subsp. laumondii (strain DSM 15139 / CIP 105565 / TT01) (Photorhabdus luminescens subsp. laumondii).